The primary structure comprises 198 residues: Na(+)-translocating NADH-quinone reductase subunit E (198 aa).

Transmembrane regions (helical) follow at residues 11–31, 35–55, 77–97, 110–130, 140–160, and 176–196; these read SVFI…FLAV, VSTA…SVPV, FLNF…LEMF, GIFL…SFMV, VVYG…LAGL, and LGIT…FSGI.

This sequence belongs to the NqrDE/RnfAE family. In terms of assembly, composed of six subunits; NqrA, NqrB, NqrC, NqrD, NqrE and NqrF.

The protein resides in the cell inner membrane. The catalysed reaction is a ubiquinone + n Na(+)(in) + NADH + H(+) = a ubiquinol + n Na(+)(out) + NAD(+). Its function is as follows. NQR complex catalyzes the reduction of ubiquinone-1 to ubiquinol by two successive reactions, coupled with the transport of Na(+) ions from the cytoplasm to the periplasm. NqrA to NqrE are probably involved in the second step, the conversion of ubisemiquinone to ubiquinol. This chain is Na(+)-translocating NADH-quinone reductase subunit E, found in Mannheimia succiniciproducens (strain KCTC 0769BP / MBEL55E).